We begin with the raw amino-acid sequence, 257 residues long: Imidazole glycerol phosphate synthase subunit HisF (257 aa).

Catalysis depends on residues aspartate 11 and aspartate 130.

This sequence belongs to the HisA/HisF family. Heterodimer of HisH and HisF.

The protein localises to the cytoplasm. The enzyme catalyses 5-[(5-phospho-1-deoxy-D-ribulos-1-ylimino)methylamino]-1-(5-phospho-beta-D-ribosyl)imidazole-4-carboxamide + L-glutamine = D-erythro-1-(imidazol-4-yl)glycerol 3-phosphate + 5-amino-1-(5-phospho-beta-D-ribosyl)imidazole-4-carboxamide + L-glutamate + H(+). Its pathway is amino-acid biosynthesis; L-histidine biosynthesis; L-histidine from 5-phospho-alpha-D-ribose 1-diphosphate: step 5/9. Its function is as follows. IGPS catalyzes the conversion of PRFAR and glutamine to IGP, AICAR and glutamate. The HisF subunit catalyzes the cyclization activity that produces IGP and AICAR from PRFAR using the ammonia provided by the HisH subunit. The polypeptide is Imidazole glycerol phosphate synthase subunit HisF (Shewanella sp. (strain MR-7)).